A 197-amino-acid polypeptide reads, in one-letter code: Probable nicotinate-nucleotide adenylyltransferase (197 aa).

The protein belongs to the NadD family.

The enzyme catalyses nicotinate beta-D-ribonucleotide + ATP + H(+) = deamido-NAD(+) + diphosphate. It participates in cofactor biosynthesis; NAD(+) biosynthesis; deamido-NAD(+) from nicotinate D-ribonucleotide: step 1/1. Functionally, catalyzes the reversible adenylation of nicotinate mononucleotide (NaMN) to nicotinic acid adenine dinucleotide (NaAD). The polypeptide is Probable nicotinate-nucleotide adenylyltransferase (Bordetella pertussis (strain Tohama I / ATCC BAA-589 / NCTC 13251)).